The sequence spans 1392 residues: DNA-directed RNA polymerase subunit beta (1392 aa).

Belongs to the RNA polymerase beta chain family. As to quaternary structure, the RNAP catalytic core consists of 2 alpha, 1 beta, 1 beta' and 1 omega subunit. When a sigma factor is associated with the core the holoenzyme is formed, which can initiate transcription.

It catalyses the reaction RNA(n) + a ribonucleoside 5'-triphosphate = RNA(n+1) + diphosphate. Its function is as follows. DNA-dependent RNA polymerase catalyzes the transcription of DNA into RNA using the four ribonucleoside triphosphates as substrates. This is DNA-directed RNA polymerase subunit beta from Neisseria gonorrhoeae (strain ATCC 700825 / FA 1090).